A 716-amino-acid chain; its full sequence is Leucine-rich repeat neuronal protein 1 (716 aa).

An N-terminal signal peptide occupies residues Met1 to Ser25. An LRRNT domain is found at Ser26 to Ser72. Residues Ser26 to Ala631 are Extracellular-facing. LRR repeat units lie at residues Asp73–Phe95, Asn96–Asn117, Gln120–Asp141, Asn144–Gly165, Asn168–Ser189, Asn192–Pro213, Asn216–Gly237, Ser240–Lys261, Asn264–Asn285, Glu313–Ser335, and Ala338–Ser359. N-linked (GlcNAc...) asparagine glycans are attached at residues Asn96 and Asn117. Residues Asn371–Pro424 form the LRRCT domain. A glycan (N-linked (GlcNAc...) asparagine) is linked at Asn385. Residues Pro424–Lys515 enclose the Ig-like C2-type domain. Cys447 and Cys499 form a disulfide bridge. An N-linked (GlcNAc...) asparagine glycan is attached at Asn517. Residues Gln525 to Ala617 enclose the Fibronectin type-III domain. Residues Leu632–Phe652 form a helical membrane-spanning segment. Over Ala653 to Trp716 the chain is Cytoplasmic. Positions Asp691–Ala700 are enriched in basic and acidic residues. A disordered region spans residues Asp691 to Trp716. Polar residues predominate over residues Thr702–Trp716.

Its subcellular location is the membrane. The sequence is that of Leucine-rich repeat neuronal protein 1 (LRRN1) from Homo sapiens (Human).